We begin with the raw amino-acid sequence, 383 residues long: Microtubule-associated protein tau (383 aa).

Positions 1 to 27 (MAEPRQEFDVMEDHAGTYGLGDRKDQE) are enriched in basic and acidic residues. Positions 1 to 198 (MAEPRQEFDV…PVPMPDLKNV (198 aa)) are disordered. An N-acetylalanine modification is found at Ala2. Phosphotyrosine occurs at positions 18 and 29. Lys44 participates in a covalent cross-link: Glycyl lysine isopeptide (Lys-Gly) (interchain with G-Cter in ubiquitin). Residue Thr53 is modified to Phosphothreonine. Over residues 72–91 (KSKDGTGSDDKKAKGADGKT) the composition is skewed to basic and acidic residues. Thr95 bears the Phosphothreonine mark. An Omega-N-methylarginine modification is found at Arg97. Position 105 is an N6,N6-dimethyllysine; alternate (Lys105). At Lys105 the chain carries N6-acetyllysine; alternate. Residues Thr111, Thr117, and Thr123 each carry the phosphothreonine modification. Residues 116-128 (KTPPAPKTPPSSG) are compositionally biased toward pro residues. Ser127, Ser133, and Ser137 each carry phosphoserine. A compositionally biased stretch (low complexity) spans 129-156 (EPPKSGDRSGYSSPGSPGTPGSRSRTPS). Phosphotyrosine is present on Tyr139. 3 positions are modified to phosphoserine: Ser140, Ser141, and Ser144. Residues Thr147 and Thr154 each carry the phosphothreonine modification. The residue at position 156 (Ser156) is a Phosphoserine. The residue at position 159 (Thr159) is a Phosphothreonine. Position 167 is an N6-acetyllysine (Lys167). At Thr173 the chain carries Phosphothreonine. A phosphoserine mark is found at Ser177 and Ser179. Tau/MAP repeat units lie at residues 186 to 216 (QTAPVPMPDLKNVKSKIGSTENLKHQPGGGK), 217 to 247 (VQIINKKLDLSNVQSKCGSKDNIKHVPGGGS), 248 to 278 (VQIVYKPVDLSKVTSKCGSLGNIHHKPGGGQ), and 279 to 310 (VEVKSEKLDFKDRVQSKIGSLDNITHVPGGGN). Lys196 participates in a covalent cross-link: Glycyl lysine isopeptide (Lys-Gly) (interchain with G-Cter in ubiquitin). Lys201 is modified (N6-acetyllysine; alternate). Lys201 is subject to N6-methyllysine; alternate. Lys201 is covalently cross-linked (Glycyl lysine isopeptide (Lys-Gly) (interchain with G-Cter in ubiquitin); alternate). Position 204 is a phosphoserine (Ser204). A Glycyl lysine isopeptide (Lys-Gly) (interchain with G-Cter in ubiquitin) cross-link involves residue Lys209. Lys223 bears the N6-acetyllysine; alternate mark. Residue Lys223 forms a Glycyl lysine isopeptide (Lys-Gly) (interchain with G-Cter in ubiquitin); alternate linkage. Phosphoserine occurs at positions 227 and 231. N6-acetyllysine is present on Lys232. Cysteines 233 and 264 form a disulfide. Position 235 is a phosphoserine (Ser235). Lys240 carries the N6-acetyllysine; alternate modification. Lys240 participates in a covalent cross-link: Glycyl lysine isopeptide (Lys-Gly) (interchain with G-Cter in ubiquitin); alternate. The residue at position 247 (Ser247) is a Phosphoserine. Residue Lys253 is modified to N6,N6-dimethyllysine; alternate. Residues Lys253, Lys259, and Lys263 each carry the N6-acetyllysine; alternate modification. Glycyl lysine isopeptide (Lys-Gly) (interchain with G-Cter in ubiquitin); alternate cross-links involve residues Lys253, Lys259, and Lys263. Ser266 carries the post-translational modification Phosphoserine. N6-acetyllysine; alternate occurs at positions 273, 285, and 289. Residues Lys273, Lys285, and Lys289 each participate in a glycyl lysine isopeptide (Lys-Gly) (interchain with G-Cter in ubiquitin); alternate cross-link. Arg291 is subject to Omega-N-methylarginine. Phosphoserine is present on Ser294. Lys295 participates in a covalent cross-link: Glycyl lysine isopeptide (Lys-Gly) (interchain with G-Cter in ubiquitin). The residue at position 298 (Ser298) is a Phosphoserine. The residue at position 311 (Lys311) is an N6-acetyllysine; alternate. Lys311 participates in a covalent cross-link: Glycyl lysine isopeptide (Lys-Gly) (interchain with G-Cter in ubiquitin); alternate. Lys317 participates in a covalent cross-link: Glycyl lysine isopeptide (Lys-Gly) (interchain with G-Cter in ubiquitin). The residue at position 327 (Lys327) is an N6-acetyllysine; alternate. Residue Lys327 forms a Glycyl lysine isopeptide (Lys-Gly) (interchain with G-Cter in ubiquitin); alternate linkage. Phosphotyrosine is present on Tyr336. 2 positions are modified to phosphoserine: Ser338 and Ser342. The interval 340-359 (VVSGDTSPRHLSNVSSTGSI) is disordered. The span at 343-358 (GDTSPRHLSNVSSTGS) shows a compositional bias: polar residues. Position 345 is a phosphothreonine (Thr345). A phosphoserine mark is found at Ser346, Ser351, Ser358, and Ser364. Residue Thr369 is modified to Phosphothreonine.

As to quaternary structure, interacts with MARK1, MARK2, MARK3 and MARK4. Interacts with SQSTM1 when polyubiquitinated. Interacts with PSMC2 through SQSTM1. Interacts with FKBP4. Binds to CSNK1D. Interacts with SGK1. Interacts with PIN1. Interacts with LRRK2. Interacts with LRP1, leading to endocytosis; this interaction is reduced in the presence of LRPAP1/RAP. Post-translationally, polyubiquitinated. Requires functional TRAF6 and may provoke SQSTM1-dependent degradation by the proteasome. In terms of processing, phosphorylation at various serine and threonine residues in S-P or T-P motifs by proline-directed protein kinases (PDPK1, CDK1, CDK5, GSK3, MAPK) (a few sites per protein in interphase, more in mitosis), and at serine residues in K-X-G-S motifs by MAP/microtubule affinity-regulating kinase (MARK1, MARK2, MARK3 or MARK4), causing detachment from microtubules, and their disassembly. Phosphorylation at Ser-204 by BRSK1 and BRSK2 in neurons affects ability to bind microtubules and plays a role in neuron polarization. Phosphorylated by PHK. Dephosphorylation at several serine and threonine residues by the serine/threonine phosphatase PPP5C. As to expression, expressed in neurons.

It is found in the cytoplasm. The protein resides in the cytosol. It localises to the cell membrane. The protein localises to the cytoskeleton. Its subcellular location is the cell projection. It is found in the axon. The protein resides in the dendrite. Its function is as follows. Promotes microtubule assembly and stability, and might be involved in the establishment and maintenance of neuronal polarity. The C-terminus binds axonal microtubules while the N-terminus binds neural plasma membrane components, suggesting that tau functions as a linker protein between both. Axonal polarity is predetermined by tau localization (in the neuronal cell) in the domain of the cell body defined by the centrosome. The sequence is that of Microtubule-associated protein tau (MAPT) from Papio hamadryas (Hamadryas baboon).